The chain runs to 420 residues: Protein disulfide isomerase CRELD1 (420 aa).

The first 29 residues, 1–29, serve as a signal peptide directing secretion; that stretch reads MAPRSSRGIAPAMLCGLSLFLGFPGLVWV. Residues 30–362 lie on the Extracellular side of the membrane; it reads QISVPPQSSP…GFFSEMTEDE (333 aa). Positions 46 to 49 match the CXXC motif; that stretch reads CHTC. Intrachain disulfides connect C46–C49, C155–C169, C163–C181, and C183–C192. Positions 153–193 constitute an EGF-like 1 domain; it reads LPCPGGAERPCGGYGHCEGEGTRGGSGHCDCQAGYGGEACG. N205 carries an N-linked (GlcNAc...) asparagine glycan. FU repeat units follow at residues 208 to 255 and 268 to 315; these read HLVC…ERAS and SYEC…AVCP. The short motif at 278 to 281 is the CXXC element; that stretch reads CLGC. 4 cysteine pairs are disulfide-bonded: C278–C281, C309–C321, C314–C330, and C332–C343. Positions 305–344 constitute an EGF-like 2; calcium-binding domain; sequence DVDECETAVCPGENQQCENTEGSYRCICADGYKQMEGICV. A helical transmembrane segment spans residues 363–383; sequence LVVLQQMFFGVIICALATLAA. Residue K384 is a topological domain, cytoplasmic. A helical membrane pass occupies residues 385–405; the sequence is GDLVFTAIFIGAVAAMTGYWL. Residues 406 to 420 lie on the Extracellular side of the membrane; that stretch reads SERSDRVLEGFIKGR.

Belongs to the CRELD family.

The protein resides in the membrane. The catalysed reaction is Catalyzes the rearrangement of -S-S- bonds in proteins.. Protein disulfide isomerase. Promotes the localization of acetylcholine receptors (AChRs) to the plasma membrane. In Bos taurus (Bovine), this protein is Protein disulfide isomerase CRELD1 (CRELD1).